Reading from the N-terminus, the 43-residue chain is Structural protein ORF5a (43 aa).

The helical transmembrane segment at 2 to 22 threads the bilayer; the sequence is FSQIGAFLDSALLLLVAFFAV.

This sequence belongs to the arteriviridae ORF5a protein family. In terms of assembly, interacts with proteins GP2B and GP4.

It localises to the virion. Its subcellular location is the host cell membrane. In terms of biological role, minor virion component that plays an essential role in virus infectivity. This chain is Structural protein ORF5a, found in Sus scrofa (Pig).